Here is a 195-residue protein sequence, read N- to C-terminus: Probable GTP-binding protein EngB (195 aa).

The 172-residue stretch at 24–195 (ELPEIALAGR…EAWDAILEKL (172 aa)) folds into the EngB-type G domain. GTP-binding positions include 32–39 (GRSNVGKS), 59–63 (GKTQL), 77–80 (DVPG), 144–147 (TKAD), and 176–178 (FSS). Residues Ser39 and Thr61 each contribute to the Mg(2+) site.

This sequence belongs to the TRAFAC class TrmE-Era-EngA-EngB-Septin-like GTPase superfamily. EngB GTPase family. Mg(2+) is required as a cofactor.

Its function is as follows. Necessary for normal cell division and for the maintenance of normal septation. In Streptococcus pneumoniae (strain JJA), this protein is Probable GTP-binding protein EngB.